The chain runs to 419 residues: Gamma-glutamyl phosphate reductase (419 aa).

Belongs to the gamma-glutamyl phosphate reductase family.

The protein localises to the cytoplasm. It catalyses the reaction L-glutamate 5-semialdehyde + phosphate + NADP(+) = L-glutamyl 5-phosphate + NADPH + H(+). It participates in amino-acid biosynthesis; L-proline biosynthesis; L-glutamate 5-semialdehyde from L-glutamate: step 2/2. In terms of biological role, catalyzes the NADPH-dependent reduction of L-glutamate 5-phosphate into L-glutamate 5-semialdehyde and phosphate. The product spontaneously undergoes cyclization to form 1-pyrroline-5-carboxylate. The chain is Gamma-glutamyl phosphate reductase from Yersinia pseudotuberculosis serotype O:1b (strain IP 31758).